We begin with the raw amino-acid sequence, 228 residues long: Small ribosomal subunit protein uS3 (228 aa).

One can recognise a KH type-2 domain in the interval 39 to 107 (VREYLQDKLK…PVHINIEEIR (69 aa)).

The protein belongs to the universal ribosomal protein uS3 family. In terms of assembly, part of the 30S ribosomal subunit. Forms a tight complex with proteins S10 and S14.

In terms of biological role, binds the lower part of the 30S subunit head. Binds mRNA in the 70S ribosome, positioning it for translation. The chain is Small ribosomal subunit protein uS3 from Stutzerimonas stutzeri (strain A1501) (Pseudomonas stutzeri).